The following is a 1199-amino-acid chain: Chromosome partition protein Smc (1199 aa).

32–39 provides a ligand contact to ATP; sequence PNGSGKSN. A coiled-coil region spans residues 192–528; it reads GVAEFDEKSE…NARIKTLKDM (337 aa). One can recognise an SMC hinge domain in the interval 546-658; the sequence is PGVVDIAGNL…VDNLENAKKL (113 aa). A coiled-coil region spans residues 691-1051; it reads IKVDIDMKKL…YLQLISEVQK (361 aa).

It belongs to the SMC family. As to quaternary structure, homodimer.

Its subcellular location is the cytoplasm. Its function is as follows. Required for chromosome condensation and partitioning. In Methanococcus voltae, this protein is Chromosome partition protein Smc.